The following is a 368-amino-acid chain: Peptide chain release factor 2 (368 aa).

At Gln251 the chain carries N5-methylglutamine.

It belongs to the prokaryotic/mitochondrial release factor family. Post-translationally, methylated by PrmC. Methylation increases the termination efficiency of RF2.

The protein localises to the cytoplasm. Peptide chain release factor 2 directs the termination of translation in response to the peptide chain termination codons UGA and UAA. The polypeptide is Peptide chain release factor 2 (Nitratiruptor sp. (strain SB155-2)).